The primary structure comprises 317 residues: Probable deoxyhypusine synthase 1 (317 aa).

Lys285 serves as the catalytic Nucleophile.

Belongs to the deoxyhypusine synthase family. Requires NAD(+) as cofactor.

It carries out the reaction [eIF5A protein]-L-lysine + spermidine = [eIF5A protein]-deoxyhypusine + propane-1,3-diamine. It participates in protein modification; eIF5A hypusination. In terms of biological role, catalyzes the NAD-dependent oxidative cleavage of spermidine and the subsequent transfer of the butylamine moiety of spermidine to the epsilon-amino group of a specific lysine residue of the eIF-5A precursor protein to form the intermediate deoxyhypusine residue. This chain is Probable deoxyhypusine synthase 1 (dys1), found in Methanosarcina mazei (strain ATCC BAA-159 / DSM 3647 / Goe1 / Go1 / JCM 11833 / OCM 88) (Methanosarcina frisia).